Consider the following 122-residue polypeptide: Large ribosomal subunit protein uL14 (122 aa).

It belongs to the universal ribosomal protein uL14 family. Part of the 50S ribosomal subunit. Forms a cluster with proteins L3 and L19. In the 70S ribosome, L14 and L19 interact and together make contacts with the 16S rRNA in bridges B5 and B8.

Binds to 23S rRNA. Forms part of two intersubunit bridges in the 70S ribosome. The polypeptide is Large ribosomal subunit protein uL14 (Lactobacillus acidophilus (strain ATCC 700396 / NCK56 / N2 / NCFM)).